We begin with the raw amino-acid sequence, 342 residues long: DNA-directed RNA polymerase subunit alpha (342 aa).

An alpha N-terminal domain (alpha-NTD) region spans residues 1-239 (MTTFLAKNWS…DQLQVFINFQ (239 aa)). Residues 254–342 (INPVLLKKVY…SLAKKHEDQY (89 aa)) are alpha C-terminal domain (alpha-CTD).

Belongs to the RNA polymerase alpha chain family. As to quaternary structure, homodimer. The RNAP catalytic core consists of 2 alpha, 1 beta, 1 beta' and 1 omega subunit. When a sigma factor is associated with the core the holoenzyme is formed, which can initiate transcription.

The catalysed reaction is RNA(n) + a ribonucleoside 5'-triphosphate = RNA(n+1) + diphosphate. Functionally, DNA-dependent RNA polymerase catalyzes the transcription of DNA into RNA using the four ribonucleoside triphosphates as substrates. This is DNA-directed RNA polymerase subunit alpha from Orientia tsutsugamushi (strain Boryong) (Rickettsia tsutsugamushi).